A 637-amino-acid polypeptide reads, in one-letter code: Biosynthetic arginine decarboxylase (637 aa).

The residue at position 101 (lysine 101) is an N6-(pyridoxal phosphate)lysine. 286 to 296 (FDVGGGLAVDY) contributes to the substrate binding site.

It belongs to the Orn/Lys/Arg decarboxylase class-II family. SpeA subfamily. It depends on Mg(2+) as a cofactor. Pyridoxal 5'-phosphate serves as cofactor.

It carries out the reaction L-arginine + H(+) = agmatine + CO2. It participates in amine and polyamine biosynthesis; agmatine biosynthesis; agmatine from L-arginine: step 1/1. Its function is as follows. Catalyzes the biosynthesis of agmatine from arginine. This chain is Biosynthetic arginine decarboxylase, found in Shewanella sp. (strain ANA-3).